The sequence spans 595 residues: GRB2-associated-binding protein 3 (595 aa).

The PH domain occupies 5 to 117 (DTVCMGWLIK…WVHSISQVCN (113 aa)). Residues 295-339 (SGVKELNIMSNTPPPRPPKPSYLSEQRQDQPLLTGHSSNKKPGYT) are disordered. Positions 317 to 331 (LSEQRQDQPLLTGHS) are enriched in polar residues. The residue at position 346 (Ser346) is a Phosphoserine. 2 disordered regions span residues 389–408 (PSAE…SELR) and 418–463 (PMSS…QEHT). A compositionally biased stretch (polar residues) spans 454–463 (RNLSTIQEHT). Phosphoserine is present on Ser480. The interval 493 to 513 (STPSEEEEEEEEEEEEEEEEE) is disordered. Residues 496–513 (SEEEEEEEEEEEEEEEEE) show a composition bias toward acidic residues.

Belongs to the GAB family. Interacts with PIK3R/p85, SHP2 and GRAP2/MONA. May interact with Grb2. Post-translationally, phosphorylated on tyrosine residue(s) after macrophage colony-stimulating factor (M-CSF) receptor stimulation. In terms of tissue distribution, highly expressed in spleen and thymus and weakly in brain, heart, lung, kidney, uterus, and embryonic stem cells. Also expressed in myeloid and macrophage cell lines.

This is GRB2-associated-binding protein 3 (Gab3) from Mus musculus (Mouse).